A 161-amino-acid chain; its full sequence is Small ribosomal subunit protein bS6 (161 aa).

The segment at 107–161 is disordered; sequence KGDERERGFRGPKPAGRFESGRGGAGGARRGYDDREEFRARNEREDGRDTDGEAE. Residues 136–161 show a composition bias toward basic and acidic residues; the sequence is RGYDDREEFRARNEREDGRDTDGEAE.

It belongs to the bacterial ribosomal protein bS6 family.

Binds together with bS18 to 16S ribosomal RNA. This is Small ribosomal subunit protein bS6 from Gluconacetobacter diazotrophicus (strain ATCC 49037 / DSM 5601 / CCUG 37298 / CIP 103539 / LMG 7603 / PAl5).